The primary structure comprises 1403 residues: Protein FAM135B (1403 aa).

4 disordered regions span residues 445–483 (EKNLINQNSSSRKDIPLSTTEAPQLGSDEDVTRRPEVQE), 514–548 (EDECWTGPRPDAVKDSLTDTDICSRSPGPDEGQTP), 648–669 (REALDTKPSQPDHAEEPEDLSA), and 718–740 (RHAHHRNSLEGGHTESNTSLPSG). Over residues 649–661 (EALDTKPSQPDHA) the composition is skewed to basic and acidic residues. The span at 731-740 (TESNTSLPSG) shows a compositional bias: polar residues. A phosphoserine mark is found at Ser-775 and Ser-776. A disordered region spans residues 790–819 (TAGFSEDLDPSSKENSPPRHTSLSYGGSRV). The segment covering 802–814 (KENSPPRHTSLSY) has biased composition (polar residues).

The protein belongs to the FAM135 family.

This Mus musculus (Mouse) protein is Protein FAM135B (Fam135b).